The chain runs to 366 residues: Flagellar P-ring protein (366 aa).

Positions 1–20 (MVIKFLSALILLLVTTAAQA) are cleaved as a signal peptide.

The protein belongs to the FlgI family. The basal body constitutes a major portion of the flagellar organelle and consists of four rings (L,P,S, and M) mounted on a central rod.

It localises to the periplasm. The protein resides in the bacterial flagellum basal body. Functionally, assembles around the rod to form the L-ring and probably protects the motor/basal body from shearing forces during rotation. The sequence is that of Flagellar P-ring protein from Escherichia coli (strain SE11).